A 160-amino-acid polypeptide reads, in one-letter code: NADH-quinone oxidoreductase subunit B (160 aa).

The [4Fe-4S] cluster site is built by cysteine 39, cysteine 40, cysteine 104, and cysteine 135.

The protein belongs to the complex I 20 kDa subunit family. NDH-1 is composed of 14 different subunits. Subunits NuoB, C, D, E, F, and G constitute the peripheral sector of the complex. It depends on [4Fe-4S] cluster as a cofactor.

The protein resides in the cell membrane. It catalyses the reaction a quinone + NADH + 5 H(+)(in) = a quinol + NAD(+) + 4 H(+)(out). NDH-1 shuttles electrons from NADH, via FMN and iron-sulfur (Fe-S) centers, to quinones in the respiratory chain. The immediate electron acceptor for the enzyme in this species is believed to be a menaquinone. Couples the redox reaction to proton translocation (for every two electrons transferred, four hydrogen ions are translocated across the cytoplasmic membrane), and thus conserves the redox energy in a proton gradient. This chain is NADH-quinone oxidoreductase subunit B, found in Amoebophilus asiaticus (strain 5a2).